A 1365-amino-acid chain; its full sequence is DNA-directed RNA polymerase subunit beta' (1365 aa).

The Zn(2+) site is built by Cys-249, Cys-316, Cys-323, and Cys-326.

Belongs to the RNA polymerase beta' chain family. RpoC2 subfamily. In cyanobacteria the RNAP catalytic core is composed of 2 alpha, 1 beta, 1 beta', 1 gamma and 1 omega subunit. When a sigma factor is associated with the core the holoenzyme is formed, which can initiate transcription. Requires Zn(2+) as cofactor.

The catalysed reaction is RNA(n) + a ribonucleoside 5'-triphosphate = RNA(n+1) + diphosphate. Its function is as follows. DNA-dependent RNA polymerase catalyzes the transcription of DNA into RNA using the four ribonucleoside triphosphates as substrates. This chain is DNA-directed RNA polymerase subunit beta', found in Synechococcus sp. (strain CC9311).